Consider the following 715-residue polypeptide: Solute carrier organic anion transporter family member 1C1 (715 aa).

The Cytoplasmic portion of the chain corresponds to Met1–Lys43. Residues Val44–Leu63 form a helical membrane-spanning segment. Residues Lys64–Gly82 lie on the Extracellular side of the membrane. The helical transmembrane segment at Ile83–Gly103 threads the bilayer. Over Ala104–Pro109 the chain is Cytoplasmic. Residues Lys110 to Glu134 traverse the membrane as a helical segment. The Extracellular portion of the chain corresponds to Lys135–Ser187. The helical transmembrane segment at Ser188–Asp216 threads the bilayer. Residues Asp217–Ala235 lie on the Cytoplasmic side of the membrane. The helical transmembrane segment at Ile236–Ile256 threads the bilayer. The Extracellular portion of the chain corresponds to Gly257–Val274. Residues Gly275 to Pro299 form a helical membrane-spanning segment. Residues Lys300–Thr351 are Cytoplasmic-facing. The helical transmembrane segment at Leu352–Phe373 threads the bilayer. Residues Gly374 to Lys393 are Extracellular-facing. Residues Ala394 to Met417 traverse the membrane as a helical segment. Topologically, residues Lys418–Arg421 are cytoplasmic. Residues Leu422–Leu445 traverse the membrane as a helical segment. Residues Phe446–Phe557 are Extracellular-facing. A glycan (N-linked (GlcNAc...) asparagine) is linked at Asn452. In terms of domain architecture, Kazal-like spans Arg473 to Gly528. Disulfide bonds link Cys479-Cys509, Cys485-Cys505, and Cys494-Cys526. N-linked (GlcNAc...) asparagine glycosylation is found at Asn523 and Asn536. A helical membrane pass occupies residues Leu558–Leu580. Residues Arg581–Ser589 are Cytoplasmic-facing. Residues Phe590–Ile615 traverse the membrane as a helical segment. Topologically, residues Asp616–Thr649 are extracellular. Residues Thr650 to Leu667 form a helical membrane-spanning segment. The Cytoplasmic segment spans residues Lys668–Leu715.

This sequence belongs to the organo anion transporter (TC 2.A.60) family. As to expression, widely expressed throughout the brain except in the cerebellum. Not detected in kidney, heart, lung, skeletal muscle, spleen, liver, nor testis. Highly expressed in cerebral microvessels throughout the brain and in the choroid plexus (at mRNA and protein level).

It is found in the cell membrane. It carries out the reaction 3,3',5'-triiodo-L-thyronine(out) = 3,3',5'-triiodo-L-thyronine(in). It catalyses the reaction L-thyroxine(out) = L-thyroxine(in). The enzyme catalyses L-thyroxine sulfate(out) = L-thyroxine sulfate(in). The catalysed reaction is 17beta-estradiol 17-O-(beta-D-glucuronate)(out) = 17beta-estradiol 17-O-(beta-D-glucuronate)(in). It carries out the reaction 3,3',5-triiodo-L-thyronine(out) = 3,3',5-triiodo-L-thyronine(in). Mediates the Na(+)-independent high affinity transport of thyroid hormones at the plasma membrane of brain capillary endothelial cells. The transport activity of substrates L-thyroxine (T4) and 3,3',5'-triiodo-L-thyronine (reverse T3, rT3) is much greater than that of 3,3',5-triiodo-L-thyronine (T3). The prehormone, T4, is the major form in the circulating blood and is converted to the active form, T3, by the iodothyronine-deiodinase in peripheral organs. T3 plays an essential role in brain development via binding to specific nuclear receptors (thyroid hormone receptor). Also transports organic anions such as the conjugated steroid 17-beta-glucuronosyl estradiol (17beta-estradiol 17-O-(beta-D-glucuronate)). Transports T4 and estrone-3-sulfate in a pH-insensitive manner. May serve as a drug efflux system at the blood brain barrier. The protein is Solute carrier organic anion transporter family member 1C1 (Slco1c1) of Mus musculus (Mouse).